Here is a 207-residue protein sequence, read N- to C-terminus: Guanylate kinase (207 aa).

Positions 3–181 constitute a Guanylate kinase-like domain; the sequence is GQLFVICGPS…AVEMVVSIVR (179 aa). 10-17 is an ATP binding site; the sequence is GPSGAGKT.

The protein belongs to the guanylate kinase family.

It is found in the cytoplasm. It catalyses the reaction GMP + ATP = GDP + ADP. Essential for recycling GMP and indirectly, cGMP. This Thermotoga maritima (strain ATCC 43589 / DSM 3109 / JCM 10099 / NBRC 100826 / MSB8) protein is Guanylate kinase (gmk).